Here is a 134-residue protein sequence, read N- to C-terminus: Submaxillary gland androgen-regulated protein 3A (134 aa).

Positions 1–22 (MKSLTWILGLWALAACFTPGES) are cleaved as a signal peptide. Positions 19-134 (PGESQRGPRG…TDPALPTPAP (116 aa)) are disordered. Pro residues-rich tracts occupy residues 28-43 (GPYP…PPCF), 50-85 (VPPP…PPYG), and 94-119 (LPPP…PPFF).

It belongs to the PROL1/PROL3 family.

Its subcellular location is the secreted. Functionally, may play a role in protection or detoxification. The polypeptide is Submaxillary gland androgen-regulated protein 3A (SMR3A) (Homo sapiens (Human)).